The primary structure comprises 252 residues: 2-succinyl-6-hydroxy-2,4-cyclohexadiene-1-carboxylate synthase (252 aa).

It belongs to the AB hydrolase superfamily. MenH family. Monomer.

The catalysed reaction is 5-enolpyruvoyl-6-hydroxy-2-succinyl-cyclohex-3-ene-1-carboxylate = (1R,6R)-6-hydroxy-2-succinyl-cyclohexa-2,4-diene-1-carboxylate + pyruvate. It participates in quinol/quinone metabolism; 1,4-dihydroxy-2-naphthoate biosynthesis; 1,4-dihydroxy-2-naphthoate from chorismate: step 3/7. The protein operates within quinol/quinone metabolism; menaquinone biosynthesis. Catalyzes a proton abstraction reaction that results in 2,5-elimination of pyruvate from 2-succinyl-5-enolpyruvyl-6-hydroxy-3-cyclohexene-1-carboxylate (SEPHCHC) and the formation of 2-succinyl-6-hydroxy-2,4-cyclohexadiene-1-carboxylate (SHCHC). The protein is 2-succinyl-6-hydroxy-2,4-cyclohexadiene-1-carboxylate synthase of Escherichia coli O17:K52:H18 (strain UMN026 / ExPEC).